The sequence spans 540 residues: Decreased expression in renal and prostate cancer protein (540 aa).

The segment covering 1–12 (MKEPRIFPRERP) has biased composition (basic and acidic residues). Disordered regions lie at residues 1-264 (MKEP…DARA) and 304-389 (SQAS…AFSQ). Low complexity-rich tracts occupy residues 113 to 125 (PRPGGLLGPSPGS) and 180 to 192 (GPSLRAGVLLTPG). Polar residues predominate over residues 304 to 316 (SQASGNMGTSPSS). Serine 313 is modified (phosphoserine). A compositionally biased stretch (low complexity) spans 321 to 330 (PGPIGPNSGP). Position 375 is an asymmetric dimethylarginine (arginine 375). Arginine 403 is modified (omega-N-methylarginine). Serine 439 bears the Phosphoserine mark. Residues 516–540 (GTNPAAFPRPGGPMAAMYPNGMLPP) form a disordered region.

This sequence belongs to the DERPC family.

It localises to the nucleus. In terms of biological role, potential tumor suppressor. The protein is Decreased expression in renal and prostate cancer protein of Bos taurus (Bovine).